The chain runs to 252 residues: 4-formylbenzenesulfonate dehydrogenase TsaC1/TsaC2 (252 aa).

Residues 9–36 (IVTGGASGFGAAIARRLSQAGAAVLVAD) and D62 contribute to the NAD(+) site. Residue S142 coordinates substrate. The active-site Proton acceptor is the Y155. K159 is a binding site for NAD(+).

The protein belongs to the short-chain dehydrogenases/reductases (SDR) family. In terms of assembly, homodimer.

It carries out the reaction 4-formylbenzenesulfonate + NAD(+) + H2O = 4-sulfobenzoate + NADH + 2 H(+). Its function is as follows. Involved in the toluene-4-sulfonate degradation pathway. Does not discriminate between the sulfonate and the carboxyl substituents and can also be involved in the p-toluenecarboxylate degradation pathway. This is 4-formylbenzenesulfonate dehydrogenase TsaC1/TsaC2 (tsaC1) from Comamonas testosteroni (Pseudomonas testosteroni).